The sequence spans 452 residues: Keratin, type II cytoskeletal 80 (452 aa).

The interval 1–82 is head; sequence MAYRSCVVGF…DPAVQQQKNQ (82 aa). A Phosphoserine modification is found at Ser-45. Residues 82 to 118 are coil 1A; sequence QEKEEMKALNDKFASLIGKVQALEQRNQLLETRWSFL. Residues 83-394 form the IF rod domain; it reads EKEEMKALND…KLMEGEESRM (312 aa). The tract at residues 119-135 is linker 1; that stretch reads QGQGSATFDLSHHYETF. Positions 136 to 227 are coil 1B; the sequence is QGRLQEELRK…TVYEQELKDL (92 aa). The segment at 228–251 is linker 12; the sequence is TAQVKDVSVTVGLDSRCHIDLSGI. Residues 252–390 are coil 2; that stretch reads VEEVKAQYDA…ATYHKLMEGE (139 aa). A tail region spans residues 391–452; it reads ESRMDLPSAT…YLSQESEASE (62 aa). Positions 412–452 are disordered; sequence TASKSGLTKTSSRKKKNRRGPVIKITEMSEKYLSQESEASE. Basic residues predominate over residues 422-432; it reads SSRKKKNRRGP. Residues 443 to 452 are compositionally biased toward polar residues; the sequence is YLSQESEASE.

Belongs to the intermediate filament family. As to quaternary structure, heterotetramer of two type I and two type II keratins.

The chain is Keratin, type II cytoskeletal 80 (Krt80) from Mus musculus (Mouse).